Consider the following 465-residue polypeptide: Ribulose bisphosphate carboxylase large chain (465 aa).

At K4 the chain carries N6,N6,N6-trimethyllysine. Substrate-binding residues include N113 and T163. The active-site Proton acceptor is K165. K167 is a binding site for substrate. Mg(2+) is bound by residues K191, D193, and E194. K191 carries the N6-carboxylysine modification. Catalysis depends on H284, which acts as the Proton acceptor. Residues R285, H317, and S369 each contribute to the substrate site.

It belongs to the RuBisCO large chain family. Type I subfamily. Heterohexadecamer of 8 large chains and 8 small chains; disulfide-linked. The disulfide link is formed within the large subunit homodimers. Mg(2+) serves as cofactor. The disulfide bond which can form in the large chain dimeric partners within the hexadecamer appears to be associated with oxidative stress and protein turnover.

Its subcellular location is the plastid. It is found in the chloroplast. The catalysed reaction is 2 (2R)-3-phosphoglycerate + 2 H(+) = D-ribulose 1,5-bisphosphate + CO2 + H2O. It carries out the reaction D-ribulose 1,5-bisphosphate + O2 = 2-phosphoglycolate + (2R)-3-phosphoglycerate + 2 H(+). RuBisCO catalyzes two reactions: the carboxylation of D-ribulose 1,5-bisphosphate, the primary event in carbon dioxide fixation, as well as the oxidative fragmentation of the pentose substrate in the photorespiration process. Both reactions occur simultaneously and in competition at the same active site. The sequence is that of Ribulose bisphosphate carboxylase large chain from Clitoria ternatea (Butterfly pea).